Reading from the N-terminus, the 334-residue chain is DNA-directed RNA polymerase subunit alpha (334 aa).

The alpha N-terminal domain (alpha-NTD) stretch occupies residues 1-231; it reads MQSNTFLTPR…EQLSVFADLK (231 aa). An alpha C-terminal domain (alpha-CTD) region spans residues 245–334; sequence IDPVLLRPVD…GKKDTSHAAP (90 aa).

This sequence belongs to the RNA polymerase alpha chain family. As to quaternary structure, homodimer. The RNAP catalytic core consists of 2 alpha, 1 beta, 1 beta' and 1 omega subunit. When a sigma factor is associated with the core the holoenzyme is formed, which can initiate transcription.

The catalysed reaction is RNA(n) + a ribonucleoside 5'-triphosphate = RNA(n+1) + diphosphate. In terms of biological role, DNA-dependent RNA polymerase catalyzes the transcription of DNA into RNA using the four ribonucleoside triphosphates as substrates. The chain is DNA-directed RNA polymerase subunit alpha from Nitrosospira multiformis (strain ATCC 25196 / NCIMB 11849 / C 71).